The primary structure comprises 438 residues: MDLGTTKYIIYTELIADGYVEKHDVIGAIFGQTEGLLSNELDLRDLQKSGRIGRIDVDLENINGKSFAKITLPSSLDKVETSILAATLETIDRVGPCFATVKITEVEDIRVSKRQYITNRARSILRKLMDEMIDTYEITEEIKESLRTEEIMEFGPENLPCGPNVVHSDSIIVVEGRADVLNLLRCGIKNTVAVEGTSVPKSIMDLTKKKTTTAFTDGDRGGELILKELLQTCDIDYVARAPYGKEVEGTSKKEIMKCLRAKVPVEQIVGNTCNDTCNVSKVIENRPEEIVEPITHKYYEKVETPVTEPVFEDEIVEEETVIVEPVKKTETEIIDVDATNEIQADKKFSGVKEIVDSIKNTGNVKFVVDGTEKTNTFKEFLTNIHEIKKMDFFAADMPISQKIVDLLYDKTPIIVGKEIHVTKKPVNLRLFSFDEIVA.

The Toprim domain occupies 169–243; the sequence is DSIIVVEGRA…DIDYVARAPY (75 aa). Mg(2+) is bound by residues glutamate 175, aspartate 217, and aspartate 219.

Belongs to the archaeal DnaG primase family. As to quaternary structure, forms a ternary complex with MCM helicase and DNA. Requires Mg(2+) as cofactor.

It catalyses the reaction ssDNA + n NTP = ssDNA/pppN(pN)n-1 hybrid + (n-1) diphosphate.. Functionally, RNA polymerase that catalyzes the synthesis of short RNA molecules used as primers for DNA polymerase during DNA replication. This Methanococcus maripaludis (strain C6 / ATCC BAA-1332) protein is DNA primase DnaG.